The primary structure comprises 220 residues: Adenylate kinase (220 aa).

10–15 (GAGKGT) contacts ATP. An NMP region spans residues 30-59 (STGDMLRAAVKAGSPLGVEAKGYMDAGKLV). AMP is bound by residues threonine 31, arginine 36, 57-59 (KLV), 85-88 (GFPR), and glutamine 92. Residues 122 to 159 (GRRTHAASGRTYHVKFNPPKVEGQDDVTGEPLIQRDDD) are LID. ATP is bound by residues arginine 123 and 132 to 133 (TY). Residues arginine 156 and arginine 167 each contribute to the AMP site. Glycine 206 contacts ATP.

The protein belongs to the adenylate kinase family. As to quaternary structure, monomer.

The protein localises to the cytoplasm. It carries out the reaction AMP + ATP = 2 ADP. The protein operates within purine metabolism; AMP biosynthesis via salvage pathway; AMP from ADP: step 1/1. Catalyzes the reversible transfer of the terminal phosphate group between ATP and AMP. Plays an important role in cellular energy homeostasis and in adenine nucleotide metabolism. The polypeptide is Adenylate kinase (Burkholderia vietnamiensis (strain G4 / LMG 22486) (Burkholderia cepacia (strain R1808))).